We begin with the raw amino-acid sequence, 338 residues long: MQRRQLLQSMGGLAASTMPFSLAFAQTSALKISHQFPGGTIKEGDFRDRLVRNFAAEVEKRSKGAMKFEIYPGSSLMKTNAQFSSMRKGALDMALIPLSYAGGEVPELNIGLMPGLVVSYEQAYSWKTKPVGIELTRVLQEKGIVLISWIWQAGGVASRGKPVVEPEDAKGMKIRGGSREMDMILKDAGAAVVSLPSNEIYAAMQTGAMDAAMTSSTSFISFRLEEVAKALTTGRTGAYWFMFEPLMMSKAIFDKLPKDQRDMLMTVGAEMEKFALEAAKKDDIDVAAVYQKAGAKVVDLSDGTIKKWQDIARKTAWKDYGAKNEGCAKLLALAQQTL.

Residues 1–25 (MQRRQLLQSMGGLAASTMPFSLAFA) form the signal peptide. Residues arginine 47, tyrosine 100, arginine 175, serine 197, 214 to 218 (TSSTS), and glutamate 244 each bind malonate.

It belongs to the bacterial solute-binding protein 7 family. In terms of assembly, the complex is comprised of an extracytoplasmic solute-binding protein and a heteromeric permease formed by two transmembrane proteins.

It localises to the periplasm. Its function is as follows. Solute-binding protein that binds malonate (in vitro). Probably part of a tripartite ATP-independent periplasmic (TRAP) transport system that mediates solute transport into the cytoplasm. This chain is Solute-binding protein Rfer_1840, found in Albidiferax ferrireducens (strain ATCC BAA-621 / DSM 15236 / T118) (Rhodoferax ferrireducens).